The following is a 742-amino-acid chain: MRPGLPSYLIVLAVCLLSHLLSSRYGAEAISEPLDKAFHLLLNTYGRPIRFLRENTTQCTYNSSLRNSTVVRENAISFNFFQSYNQYYVFHMPRCLFAGPLAEQFLNQVDLTETLERYQQRLNTYALVSKDLASYRSFSQQLKAQDSLGEQPTTVPPPIDLSIPHVWMPPQTTPHGWTESHTTSGLHRPHFNQTCILFDGHDLLFSTVTPCLHQGFYLIDELRYVKITLTEDFFVVTVSIDDDTPMLLIFGHLPRVLFKAPYQRDNFILRQTEKHELLVLVKKDQLNRHSYLKDPDFLDAALDFNYLDLSALLRNSFHRYAVDVLKSGRCQMLDRRTVEMAFAYALALFAAARQEEAGAQVSVPRALDRQAALLQIQEFMITCLSQTPPRTTLLLYPTAVDLAKRALWTPNQITDITSLVRLVYILSKQNQQHLIPQWALRQIADFALKLHKTHLASFLSAFARQELYLMGSLVHSMLVHTTERREIFIVETGLCSLAELSHFTQLLAHPHHEYLSDLYTPCSSSGRRDHSLERLTRLFPDATVPTTVPAALSILSTMQPSTLETFPDLFCLPLGESFSALTVSEHVSYVVTNQYLIKGISYPVSTTVVGQSLIITQTDSQTKCELTRNMHTTHSITAALNISLENCAFCQSALLEYDDTQGVINIMYMHDSDDVLFALDPYNEVVVSSPRTHYLMLLKNGTVLEVTDVVVDATDSRLLMMSVYALSAIIGIYLLYRMLKTC.

Positions 1-29 are cleaved as a signal peptide; it reads MRPGLPSYLIVLAVCLLSHLLSSRYGAEA. The Virion surface segment spans residues 30–719; sequence ISEPLDKAFH…VVDATDSRLL (690 aa). Asn55, Asn62, Asn67, and Asn192 each carry an N-linked (GlcNAc...) asparagine; by host glycan. The segment at 217-280 is interaction with gL; it reads YLIDELRYVK…QTEKHELLVL (64 aa). Residues Asn641 and Asn700 are each glycosylated (N-linked (GlcNAc...) asparagine; by host). A helical membrane pass occupies residues 720–740; the sequence is MMSVYALSAIIGIYLLYRMLK. The Intravirion segment spans residues 741 to 742; sequence TC.

Belongs to the herpesviridae glycoprotein H family. Interacts with glycoprotein L (gL); this interaction is necessary for the correct processing and cell surface expression of gH. The heterodimer gH/gL seems to interact with gB trimers during fusion. Forms the envelope pentamer complex (PC) composed of gH, gL, UL128, UL130, and UL131A. The pentamer interacts with host NRP2. Forms the envelope trimer complex composed of gH, gL, and gO. The trimer interacts with host PDGFRA. The trimer also interacts with host EPHA2. In terms of processing, N-glycosylated, O-glycosylated, and sialylated.

Its subcellular location is the virion membrane. It is found in the host cell membrane. The protein localises to the host endosome membrane. Functionally, the heterodimer glycoprotein H-glycoprotein L is required for the fusion of viral and plasma membranes leading to virus entry into the host cell. Following initial binding to host receptor, membrane fusion is mediated by the fusion machinery composed of gB and the heterodimer gH/gL. May also be involved in the fusion between the virion envelope and the outer nuclear membrane during virion morphogenesis. In human cytomegalovirus, forms two distincts complexes to mediate viral entry, a trimer and a pentamer at the surface of the virion envelope. The gH-gL-gO trimer is required for infection in fibroblasts by interacting with host PDGFRA, and in glioblastoma cells by interacting with host EPHA2. The gH-gL-UL128-UL130-UL131A pentamer is essential for viral entry in epithelial, endothelial and myeloid cells via interaction with host NRP2. The sequence is that of Envelope glycoprotein H from Human cytomegalovirus (strain Towne) (HHV-5).